Here is a 577-residue protein sequence, read N- to C-terminus: Arginine--tRNA ligase (577 aa).

The 'HIGH' region signature appears at 122 to 132; the sequence is PNVAKEMHVGH.

This sequence belongs to the class-I aminoacyl-tRNA synthetase family. As to quaternary structure, monomer.

It localises to the cytoplasm. It catalyses the reaction tRNA(Arg) + L-arginine + ATP = L-arginyl-tRNA(Arg) + AMP + diphosphate. This is Arginine--tRNA ligase from Klebsiella pneumoniae (strain 342).